The sequence spans 180 residues: Large ribosomal subunit protein uL5 (180 aa).

Belongs to the universal ribosomal protein uL5 family. In terms of assembly, part of the 50S ribosomal subunit; part of the 5S rRNA/L5/L18/L25 subcomplex. Contacts the 5S rRNA and the P site tRNA. Forms a bridge to the 30S subunit in the 70S ribosome.

In terms of biological role, this is one of the proteins that bind and probably mediate the attachment of the 5S RNA into the large ribosomal subunit, where it forms part of the central protuberance. In the 70S ribosome it contacts protein S13 of the 30S subunit (bridge B1b), connecting the 2 subunits; this bridge is implicated in subunit movement. Contacts the P site tRNA; the 5S rRNA and some of its associated proteins might help stabilize positioning of ribosome-bound tRNAs. The protein is Large ribosomal subunit protein uL5 of Acholeplasma laidlawii (strain PG-8A).